We begin with the raw amino-acid sequence, 145 residues long: D-aminoacyl-tRNA deacylase (145 aa).

Positions 137-138 match the Gly-cisPro motif, important for rejection of L-amino acids motif; the sequence is GP.

It belongs to the DTD family. Homodimer.

The protein localises to the cytoplasm. It catalyses the reaction glycyl-tRNA(Ala) + H2O = tRNA(Ala) + glycine + H(+). The catalysed reaction is a D-aminoacyl-tRNA + H2O = a tRNA + a D-alpha-amino acid + H(+). Functionally, an aminoacyl-tRNA editing enzyme that deacylates mischarged D-aminoacyl-tRNAs. Also deacylates mischarged glycyl-tRNA(Ala), protecting cells against glycine mischarging by AlaRS. Acts via tRNA-based rather than protein-based catalysis; rejects L-amino acids rather than detecting D-amino acids in the active site. By recycling D-aminoacyl-tRNA to D-amino acids and free tRNA molecules, this enzyme counteracts the toxicity associated with the formation of D-aminoacyl-tRNA entities in vivo and helps enforce protein L-homochirality. In Salmonella choleraesuis (strain SC-B67), this protein is D-aminoacyl-tRNA deacylase.